A 398-amino-acid polypeptide reads, in one-letter code: MSFMNFEPKPLADTDIFKPIKIGNTELKHRVVMPALTRMRALHPGNVPNPDWAVEYYRQRSQYPGTMIITEGAFPSAQSGGYDNAPGVWSEEQLAQWRKIFKAIHDNKSFVWVQLWVLGRQAFADNLARDGLRYDSASDEVYMGEDEKERAIRSNNPQHGITKDEIKQYIRDYVDAAKKCIDAGADGVEIHSANGYLLNQFLDPISNKRTDEYGGSIENRARFVLEVVDAVVDAVGAERTSIRFSPYGVFGTMSGGSDPVLVAQFAYVLAELEKRAKAGKRLAYVDLVEPRVTSPFQPEFEGWYKGGTNEFVYSVWKGNVLRVGNYALDPDAAITDSKNPNTLIGYGRAFIANPDLVERLEKGLPLNQYDRPSFYKMSAEGYIDYPTYEEAVAKGYKK.

2 residues coordinate FMN: T37 and H191. Residues H191 and N194 each contribute to the substrate site. Y196 (proton donor) is an active-site residue. FMN is bound by residues R243 and R348. Position 375 (Y375) interacts with substrate.

This sequence belongs to the NADH:flavin oxidoreductase/NADH oxidase family. In terms of assembly, homodimer or heterodimer. FMN is required as a cofactor.

It carries out the reaction butanoate + NAD(+) = (2E)-2-butenoate + NADH + H(+). Functionally, enoate reductase with broad substrate specificity for different alpha,beta-unsaturated carbonyl compounds. Prefers NADPH over NADH as cofactor. The polypeptide is Enoate reductase 1 (KYE1) (Kluyveromyces lactis (strain ATCC 8585 / CBS 2359 / DSM 70799 / NBRC 1267 / NRRL Y-1140 / WM37) (Yeast)).